The primary structure comprises 124 residues: Fluoride-specific ion channel FluC (124 aa).

Helical transmembrane passes span 5 to 25 (ILAV…AGTW), 37 to 57 (ATLA…GLFL), 69 to 89 (GLIV…LDTL), and 99 to 119 (LALG…WAGL). Na(+) contacts are provided by G76 and T79.

It belongs to the fluoride channel Fluc/FEX (TC 1.A.43) family.

It localises to the cell inner membrane. It carries out the reaction fluoride(in) = fluoride(out). Its activity is regulated as follows. Na(+) is not transported, but it plays an essential structural role and its presence is essential for fluoride channel function. Functionally, fluoride-specific ion channel. Important for reducing fluoride concentration in the cell, thus reducing its toxicity. The sequence is that of Fluoride-specific ion channel FluC from Pseudomonas syringae pv. tomato (strain ATCC BAA-871 / DC3000).